The chain runs to 476 residues: E3 SUMO-protein ligase EGR2 (476 aa).

A compositionally biased stretch (low complexity) spans 127 to 141 (PASTTASSSVTSASP). The disordered stretch occupies residues 127–178 (PASTTASSSVTSASPNPLATGPLGVCTMSQTQPDLDHLYSPPPPPPPYSGCA). Residues 162–165 (DHLY) carry the HCFC1-binding-motif (HBM) motif. K247 is subject to N6-acetyllysine; by EP300. Disordered regions lie at residues 275 to 300 (GPSA…SSSA) and 318 to 341 (RPIL…RPYP). Over residues 281–290 (TGPGASGGSE) the composition is skewed to gly residues. 3 consecutive C2H2-type zinc fingers follow at residues 340 to 364 (YPCP…IRIH), 370 to 392 (FQCR…IRTH), and 398 to 420 (FACD…TKIH). The disordered stretch occupies residues 412-476 (ERKRHTKIHL…APCSSRTRTP (65 aa)). Over residues 415–425 (RHTKIHLRQKE) the composition is skewed to basic residues. Residues 429–476 (SAPSASVPAPSTASCSGGVQPGGTLCSSNSSSLGGGPLAPCSSRTRTP) are compositionally biased toward low complexity.

This sequence belongs to the EGR C2H2-type zinc-finger protein family. Interacts with HCFC1. Interacts with WWP2. Interacts with UBC9. Interacts with CITED1. Interacts (via phosphorylated form) with SFN. In terms of processing, ubiquitinated by WWP2 leading to proteasomal degradation. Acetylated at Lys-247. May be deacetylated by HDAC6, HDAC10 or SIRT1.

It localises to the nucleus. Its pathway is protein modification; protein sumoylation. In terms of biological role, sequence-specific DNA-binding transcription factor. Plays a role in hindbrain segmentation by regulating the expression of a subset of homeobox containing genes and in Schwann cell myelination by regulating the expression of genes involved in the formation and maintenance of myelin. Binds to two EGR2-consensus sites EGR2A (5'-CTGTAGGAG-3') and EGR2B (5'-ATGTAGGTG-3') in the HOXB3 enhancer and promotes HOXB3 transcriptional activation. Binds to specific DNA sites located in the promoter region of HOXA4, HOXB2 and ERBB2. Regulates hindbrain segmentation by controlling the expression of Hox genes, such as HOXA4, HOXB3 and HOXB2, and thereby specifying odd and even rhombomeres. Promotes the expression of HOXB3 in the rhombomere r5 in the hindbrain. Regulates myelination in the peripheral nervous system after birth, possibly by regulating the expression of myelin proteins, such as MPZ, and by promoting the differentiation of Schwann cells. Involved in the development of the jaw openener musculature, probably by playing a role in its innervation through trigeminal motor neurons. May play a role in adipogenesis, possibly by regulating the expression of CEBPB. Its function is as follows. E3 SUMO-protein ligase helping SUMO1 conjugation to its coregulators NAB1 and NAB2, whose sumoylation down-regulates EGR2 transcriptional activity. This Homo sapiens (Human) protein is E3 SUMO-protein ligase EGR2 (EGR2).